Here is a 590-residue protein sequence, read N- to C-terminus: Monoterepene synthase TPS1, chloropastic (590 aa).

The N-terminal 42 residues, 1–42 (MALNTFLHFPPCSLSSFSCAVPKLPLAIFHKTMARQIRCPRA), are a transit peptide targeting the chloroplast. Residues Arg-304, Asp-341, Asp-345, Arg-483, and Asp-486 each coordinate (2E)-geranyl diphosphate. Residues Asp-341 and Asp-345 each contribute to the Mg(2+) site. The short motif at 341–345 (DDMYD) is the DDXXD motif element. Positions 486, 490, and 494 each coordinate Mg(2+).

Belongs to the terpene synthase family. Tpsb subfamily. As to quaternary structure, monomer. Requires Mg(2+) as cofactor.

The protein localises to the plastid. It localises to the chloroplast. It carries out the reaction (2E)-geranyl diphosphate = beta-thujene + diphosphate. The catalysed reaction is (2E)-geranyl diphosphate = sabinene + diphosphate. It catalyses the reaction (2E)-geranyl diphosphate = beta-pinene + diphosphate. The enzyme catalyses (2E)-geranyl diphosphate = alpha-terpinene + diphosphate. The protein operates within secondary metabolite biosynthesis; terpenoid biosynthesis. Monoterpene synthase involved in the biosynthesis of volatile organic compounds. Mediates the conversion of (2E)-geranyl diphosphate (GPP) into beta-thujene, sabinene, beta-pinene and alpha-terpinene. Does not use (2E,6E)-farnesyl diphosphate (FPP) as substrate. The sequence is that of Monoterepene synthase TPS1, chloropastic from Cananga odorata (Ylang-ylang tree).